The following is a 212-amino-acid chain: Kynurenine formamidase (212 aa).

Residue Trp17 coordinates substrate. Zn(2+)-binding residues include His48, His52, and Asp54. His58 (proton donor/acceptor) is an active-site residue. Positions 161 and 173 each coordinate Zn(2+).

The protein belongs to the Cyclase 1 superfamily. KynB family. Homodimer. It depends on Zn(2+) as a cofactor.

It catalyses the reaction N-formyl-L-kynurenine + H2O = L-kynurenine + formate + H(+). Its pathway is amino-acid degradation; L-tryptophan degradation via kynurenine pathway; L-kynurenine from L-tryptophan: step 2/2. Functionally, catalyzes the hydrolysis of N-formyl-L-kynurenine to L-kynurenine, the second step in the kynurenine pathway of tryptophan degradation. The chain is Kynurenine formamidase from Salinibacter ruber (strain DSM 13855 / M31).